Here is a 437-residue protein sequence, read N- to C-terminus: NADH-ubiquinone oxidoreductase chain 4 (437 aa).

Transmembrane regions (helical) follow at residues 8–28 (GASICLFPFWEVTMLTLAFII), 50–70 (LTPIGTALIFLTLMVTLLVLI), 78–98 (YKYIGCLSSLNLVLMMAFCVC), 100–120 (FLTFYVMFEVSLIPTLLLILL), 132–152 (FYLMLYTVTASLPLLLLLLYL), 177–197 (LVGLMMAFLVKLPIYTCHLWL), 212–232 (LAGVLLKLGGYGLYMLINFII), 239–259 (VISVIITLSLWGAVIASIICI), 266–286 (ALVAYSSVAHMSLVSAGILMM), 297–317 (TMIAHGYTSSALFVLANLSYL), 324–344 (LMFMKGLLAIFPAMAFYWFLF), 361–381 (LLIIPSMYIASYMLLILMCII), and 417–437 (HVLTAHLLPTFILLIPQLFSV).

This sequence belongs to the complex I subunit 4 family.

It localises to the mitochondrion membrane. The enzyme catalyses a ubiquinone + NADH + 5 H(+)(in) = a ubiquinol + NAD(+) + 4 H(+)(out). Core subunit of the mitochondrial membrane respiratory chain NADH dehydrogenase (Complex I) that is believed to belong to the minimal assembly required for catalysis. Complex I functions in the transfer of electrons from NADH to the respiratory chain. The immediate electron acceptor for the enzyme is believed to be ubiquinone. The chain is NADH-ubiquinone oxidoreductase chain 4 (ND4) from Albinaria caerulea (Land snail).